A 248-amino-acid chain; its full sequence is Chitin deacetylase (248 aa).

Positions 1–26 (MHFSTLFGAAATAALAGSTNASPLAR) are cleaved as a signal peptide. Cystine bridges form between Cys-38–Cys-237 and Cys-148–Cys-152. The NodB homology domain maps to 42–232 (GLVALTYDDG…TLKSKGYRAV (191 aa)). Asp-49 (proton acceptor) is an active-site residue. Residue Asp-49 participates in acetate binding. Co(2+) is bound by residues Asp-50, His-104, and His-108. Tyr-145 is an acetate binding site. Catalysis depends on His-206, which acts as the Proton donor.

The protein belongs to the polysaccharide deacetylase family. As to quaternary structure, monomer. Co(2+) is required as a cofactor. N-glycosylated.

It localises to the secreted. The enzyme catalyses [(1-&gt;4)-N-acetyl-beta-D-glucosaminyl](n) + n H2O = chitosan + n acetate. Hydrolyzes the N-acetamido groups of N-acetyl-D-glucosamine polymers in chitin to form chitosan and acetate. May play a role in evasion of the host immune response; plant chitinases liberate chitin molecules from the fungal cell wall which act as elicitors of the plant immune response, deacetylation of the liberated chitin neutralizes elicitor activity. This chain is Chitin deacetylase, found in Colletotrichum lindemuthianum (Bean anthracnose fungus).